Here is a 556-residue protein sequence, read N- to C-terminus: Peptide chain release factor 3 (556 aa).

In terms of domain architecture, tr-type G spans 28-297 (QQRRNFAIIS…AFLDYALKPG (270 aa)). GTP is bound by residues 37–44 (SHPDAGKT), 105–109 (DTPGH), and 159–162 (NKMD).

This sequence belongs to the TRAFAC class translation factor GTPase superfamily. Classic translation factor GTPase family. PrfC subfamily.

The protein localises to the cytoplasm. Its function is as follows. Increases the formation of ribosomal termination complexes and stimulates activities of RF-1 and RF-2. It binds guanine nucleotides and has strong preference for UGA stop codons. It may interact directly with the ribosome. The stimulation of RF-1 and RF-2 is significantly reduced by GTP and GDP, but not by GMP. This is Peptide chain release factor 3 from Synechococcus sp. (strain ATCC 27144 / PCC 6301 / SAUG 1402/1) (Anacystis nidulans).